The chain runs to 381 residues: NF-kappa-B inhibitor-like protein 1 (381 aa).

The disordered stretch occupies residues 1–34 (MSNPSPQVPEEEASTSVCRPKSSMASTSRRQRRE). ANK repeat units follow at residues 64 to 93 (GQPP…DPAH) and 97 to 130 (HGDT…AMGI). 2 disordered regions span residues 129-167 (GIKN…EWRQ) and 186-294 (GDAS…RGSL). A Phosphoserine modification is found at Ser-150. Residues 150 to 159 (SAEEEEEDDA) show a composition bias toward acidic residues. 2 stretches are compositionally biased toward basic and acidic residues: residues 218–228 (REAEGSRRPPR) and 238–287 (QQEE…EHPR).

Interacts with CACTIN (via N-terminal domain); the interaction occurs in a proinflammatory-independent manner. As to expression, detected in different cell types including monocytes, T-cells, B-cells and hepatocytes.

Its subcellular location is the nucleus. Functionally, involved in the regulation of innate immune response. Acts as negative regulator of Toll-like receptor and interferon-regulatory factor (IRF) signaling pathways. Contributes to the negative regulation of transcriptional activation of NF-kappa-B target genes in response to endogenous proinflammatory stimuli. The polypeptide is NF-kappa-B inhibitor-like protein 1 (NFKBIL1) (Homo sapiens (Human)).